The following is a 159-amino-acid chain: 2-C-methyl-D-erythritol 2,4-cyclodiphosphate synthase (159 aa).

The a divalent metal cation site is built by Asp8 and His10. 4-CDP-2-C-methyl-D-erythritol 2-phosphate-binding positions include 8-10 and 34-35; these read DVH and HS. His42 contributes to the a divalent metal cation binding site. 4-CDP-2-C-methyl-D-erythritol 2-phosphate-binding positions include 56–58, 61–65, 100–106, 132–135, Phe139, and Arg142; these read DIG, FPDTD, AQAPKML, and TTTE.

It belongs to the IspF family. As to quaternary structure, homotrimer. A divalent metal cation serves as cofactor.

It catalyses the reaction 4-CDP-2-C-methyl-D-erythritol 2-phosphate = 2-C-methyl-D-erythritol 2,4-cyclic diphosphate + CMP. It functions in the pathway isoprenoid biosynthesis; isopentenyl diphosphate biosynthesis via DXP pathway; isopentenyl diphosphate from 1-deoxy-D-xylulose 5-phosphate: step 4/6. Its function is as follows. Involved in the biosynthesis of isopentenyl diphosphate (IPP) and dimethylallyl diphosphate (DMAPP), two major building blocks of isoprenoid compounds. Catalyzes the conversion of 4-diphosphocytidyl-2-C-methyl-D-erythritol 2-phosphate (CDP-ME2P) to 2-C-methyl-D-erythritol 2,4-cyclodiphosphate (ME-CPP) with a corresponding release of cytidine 5-monophosphate (CMP). The protein is 2-C-methyl-D-erythritol 2,4-cyclodiphosphate synthase of Salmonella typhi.